Consider the following 328-residue polypeptide: CMP-N-acetylneuraminate-beta-galactosamide-alpha-2,3-sialyltransferase 4 (328 aa).

Residues 1-7 are Cytoplasmic-facing; that stretch reads MCPAGWK. A helical; Signal-anchor for type II membrane protein transmembrane segment spans residues 8–25; the sequence is LLAMLALVLVVMVWYSIS. Over 26–328 the chain is Lumenal; that stretch reads REDSFYFPIP…MGAVKNLTSF (303 aa). Asn-56, Asn-126, Asn-305, and Asn-324 each carry an N-linked (GlcNAc...) asparagine glycan. Cys-115 and Cys-268 are disulfide-bonded.

The protein belongs to the glycosyltransferase 29 family. The soluble form derives from the membrane form by proteolytic processing.

It is found in the golgi apparatus. Its subcellular location is the golgi stack membrane. It localises to the secreted. It catalyses the reaction a beta-D-galactosyl-(1-&gt;3)-N-acetyl-beta-D-galactosaminyl derivative + CMP-N-acetyl-beta-neuraminate = an N-acetyl-alpha-neuraminyl-(2-&gt;3)-beta-D-galactosyl-(1-&gt;3)-N-acetyl-beta-D-galactosaminyl derivative + CMP + H(+). It carries out the reaction a beta-D-galactosyl-(1-&gt;3)-N-acetyl-alpha-D-galactosaminyl derivative + CMP-N-acetyl-beta-neuraminate = an N-acetyl-alpha-neuraminyl-(2-&gt;3)-beta-D-galactosyl-(1-&gt;3)-N-acetyl-alpha-D-galactosaminyl derivative + CMP + H(+). The enzyme catalyses a beta-D-galactosyl-(1-&gt;4)-N-acetyl-beta-D-glucosaminyl derivative + CMP-N-acetyl-beta-neuraminate = an N-acetyl-alpha-neuraminyl-(2-&gt;3)-beta-D-galactosyl-(1-&gt;4)-N-acetyl-beta-D-glucosaminyl derivative + CMP + H(+). The catalysed reaction is a ganglioside GM1 (d18:1(4E)) + CMP-N-acetyl-beta-neuraminate = a ganglioside GD1a (d18:1(4E)) + CMP + H(+). It catalyses the reaction a ganglioside GA1 (d18:1(4E)) + CMP-N-acetyl-beta-neuraminate = a ganglioside GM1b (d18:1(4E)) + CMP + H(+). It carries out the reaction a ganglioside GT1c (d18:1(4E)) + CMP-N-acetyl-beta-neuraminate = a ganglioside GQ1c (d18:1(4E)) + CMP + H(+). The enzyme catalyses a neolactoside nLc4Cer + CMP-N-acetyl-beta-neuraminate = a neolactoside IV(3)-alpha-NeuAc-nLc4Cer + CMP + H(+). The catalysed reaction is a neolactoside nLc4Cer(d18:1(4E)) + CMP-N-acetyl-beta-neuraminate = a neolactoside IV(3)-alpha-NeuAc-nLc4Cer(d18:1(4E)) + CMP + H(+). Its pathway is protein modification; protein glycosylation. The protein operates within glycolipid biosynthesis. Functionally, a beta-galactoside alpha2-3 sialyltransferase involved in terminal sialylation of glycoproteins and glycolipids. Catalyzes the transfer of sialic acid (N-acetyl-neuraminic acid; Neu5Ac) from the nucleotide sugar donor CMP-Neu5Ac onto acceptor Galbeta-(1-&gt;3)-GalNAc- and Galbeta-(1-&gt;4)-GlcNAc-terminated glycoconjugates through an alpha2-3 linkage. Plays a major role in hemostasis. Responsible for sialylation of plasma VWF/von Willebrand factor, preventing its recognition by asialoglycoprotein receptors (ASGPR) and subsequent clearance. Regulates ASGPR-mediated clearance of platelets. Participates in the biosynthesis of the sialyl Lewis X epitopes, both on O- and N-glycans, which are recognized by SELE/E-selectin, SELP/P-selectin and SELL/L-selectin. Essential for selectin-mediated rolling and adhesion of leukocytes during extravasation. Contributes to adhesion and transendothelial migration of neutrophils likely through terminal sialylation of CXCR2. In glycosphingolipid biosynthesis, sialylates GM1 and GA1 gangliosides to form GD1a and GM1b, respectively. Metabolizes brain c-series ganglioside GT1c forming GQ1c. Synthesizes ganglioside LM1 (IV3Neu5Ac-nLc4Cer), a major structural component of peripheral nerve myelin. The protein is CMP-N-acetylneuraminate-beta-galactosamide-alpha-2,3-sialyltransferase 4 (ST3GAL4) of Pan troglodytes (Chimpanzee).